The primary structure comprises 550 residues: Acidic amino acid decarboxylase GADL1 (550 aa).

Lys362 is subject to N6-(pyridoxal phosphate)lysine.

The protein belongs to the group II decarboxylase family. In terms of assembly, homodimer. Requires pyridoxal 5'-phosphate as cofactor. As to expression, expressed in skeletal muscles and kidney (at protein level). Expressed in skeletal muscle and weakly in brain. Not expressed in liver or kidney. Expressed in brain, olfactory bulb, liver, muscle and kidney with the highest expression in olfactory bulb and almost not detected in liver (at protein level).

The catalysed reaction is L-aspartate + H(+) = beta-alanine + CO2. It catalyses the reaction 3-sulfino-L-alanine + H(+) = hypotaurine + CO2. The enzyme catalyses L-cysteate + H(+) = taurine + CO2. With respect to regulation, activated weakly by 0.2-0.4 mM Li(+). Inhibited by bis-carboxymethyl-trithiocarbonate, ethylxanthogenacetic acid and 2,5-disulfoaniline. In terms of biological role, catalyzes the decarboxylation of L-aspartate, 3-sulfino-L-alanine (cysteine sulfinic acid), and L-cysteate to beta-alanine, hypotaurine and taurine, respectively. The preferred substrate is L-aspartate. Does not exhibit any decarboxylation activity toward glutamate. The sequence is that of Acidic amino acid decarboxylase GADL1 from Mus musculus (Mouse).